The chain runs to 49 residues: Large ribosomal subunit protein bL33A (49 aa).

The protein belongs to the bacterial ribosomal protein bL33 family.

This chain is Large ribosomal subunit protein bL33A, found in Lactobacillus delbrueckii subsp. bulgaricus (strain ATCC 11842 / DSM 20081 / BCRC 10696 / JCM 1002 / NBRC 13953 / NCIMB 11778 / NCTC 12712 / WDCM 00102 / Lb 14).